Reading from the N-terminus, the 329-residue chain is Ribonucleoside-diphosphate reductase subunit beta (329 aa).

Residues Asp66, Glu97, and His101 each coordinate Fe cation. Tyr105 is a catalytic residue. Fe cation is bound by residues Glu164, Glu198, and His201.

This sequence belongs to the ribonucleoside diphosphate reductase small chain family. As to quaternary structure, tetramer of two alpha and two beta subunits. Requires Fe cation as cofactor.

It carries out the reaction a 2'-deoxyribonucleoside 5'-diphosphate + [thioredoxin]-disulfide + H2O = a ribonucleoside 5'-diphosphate + [thioredoxin]-dithiol. Functionally, provides the precursors necessary for DNA synthesis. Catalyzes the biosynthesis of deoxyribonucleotides from the corresponding ribonucleotides. The polypeptide is Ribonucleoside-diphosphate reductase subunit beta (nrdF) (Bacillus subtilis (strain 168)).